The sequence spans 445 residues: tRNA(Ile)-lysidine synthase (445 aa).

38–43 (SGGLDS) is an ATP binding site.

It belongs to the tRNA(Ile)-lysidine synthase family.

It localises to the cytoplasm. It catalyses the reaction cytidine(34) in tRNA(Ile2) + L-lysine + ATP = lysidine(34) in tRNA(Ile2) + AMP + diphosphate + H(+). In terms of biological role, ligates lysine onto the cytidine present at position 34 of the AUA codon-specific tRNA(Ile) that contains the anticodon CAU, in an ATP-dependent manner. Cytidine is converted to lysidine, thus changing the amino acid specificity of the tRNA from methionine to isoleucine. The chain is tRNA(Ile)-lysidine synthase from Neisseria gonorrhoeae (strain ATCC 700825 / FA 1090).